The following is a 198-amino-acid chain: MORN repeat-containing protein 4 homolog (198 aa).

Ala2 carries the post-translational modification N-acetylalanine. Residues 23–45 are compositionally biased toward low complexity; the sequence is QHQQHPHQQGQHGHHQQGQGQSQ. The tract at residues 23-46 is disordered; that stretch reads QHQQHPHQQGQHGHHQQGQGQSQY. MORN repeat units follow at residues 64–87, 88–109, 111–132, and 134–153; these read YIGE…DGTR, YDGQ…ADGA, YEGE…ADGM, and YEGE…TFQD.

Interacts with ninaC. In terms of processing, phosphorylated under dark conditions and is dephosphorylated by light exposure. As to expression, retina. Expressed primarily in the phototransducing compartment of photoreceptor cells, the rhabdomeres and its expression is dependent on ninaC protein (at protein level).

Its subcellular location is the membrane. The protein resides in the cell projection. It is found in the rhabdomere membrane. Its function is as follows. Plays a role in promoting axonal degeneration following neuronal injury by toxic insult or trauma. Organizes rhabdomeric components to suppress random activation of the phototransduction cascade and thus increases the signaling fidelity of dark-adapted photoreceptors. The rtp/ninaC complex is required for stability of inad and inac and the normal termination of phototransduction in the retina. The protein is MORN repeat-containing protein 4 homolog of Drosophila melanogaster (Fruit fly).